The following is a 261-amino-acid chain: Cytochrome c oxidase subunit 3 (261 aa).

Residues 1-15 (MTHQTHAYHMVNPSP) lie on the Mitochondrial matrix side of the membrane. A helical transmembrane segment spans residues 16-34 (WPLTGALSALLMTSGLIMW). Residues 35 to 40 (FHFNSM) lie on the Mitochondrial intermembrane side of the membrane. A helical membrane pass occupies residues 41–66 (YLLMLGLTTNTLTMYQWWRDIVREST). At 67–72 (FQGHHT) the chain is on the mitochondrial matrix side. The helical transmembrane segment at 73 to 105 (PIVQKGLRYGMILFIVSEVFFFAGFFWAFYHSS) threads the bilayer. The Mitochondrial intermembrane portion of the chain corresponds to 106–128 (LAPTPELGGCWPPTGITPLNPME). The chain crosses the membrane as a helical span at residues 129 to 152 (VPLLNTSVLLASGVSITWAHHSLM). At 153–155 (EGN) the chain is on the mitochondrial matrix side. The helical transmembrane segment at 156–183 (RKHMLQALFITISLGVYFTLLQASEYYE) threads the bilayer. The Mitochondrial intermembrane segment spans residues 184 to 190 (TPFTISD). Residues 191–223 (GIYGSTFFMATGFHGLHVIIGSTFLIVCFMRQL) form a helical membrane-spanning segment. Residues 224 to 232 (KFHFTSNHH) are Mitochondrial matrix-facing. A helical transmembrane segment spans residues 233–256 (FGFEAAAWYWHFVDVVWLFLYVSI). Residues 257–261 (YWWGS) lie on the Mitochondrial intermembrane side of the membrane.

This sequence belongs to the cytochrome c oxidase subunit 3 family. As to quaternary structure, component of the cytochrome c oxidase (complex IV, CIV), a multisubunit enzyme composed of 14 subunits. The complex is composed of a catalytic core of 3 subunits MT-CO1, MT-CO2 and MT-CO3, encoded in the mitochondrial DNA, and 11 supernumerary subunits COX4I, COX5A, COX5B, COX6A, COX6B, COX6C, COX7A, COX7B, COX7C, COX8 and NDUFA4, which are encoded in the nuclear genome. The complex exists as a monomer or a dimer and forms supercomplexes (SCs) in the inner mitochondrial membrane with NADH-ubiquinone oxidoreductase (complex I, CI) and ubiquinol-cytochrome c oxidoreductase (cytochrome b-c1 complex, complex III, CIII), resulting in different assemblies (supercomplex SCI(1)III(2)IV(1) and megacomplex MCI(2)III(2)IV(2)).

It localises to the mitochondrion inner membrane. It carries out the reaction 4 Fe(II)-[cytochrome c] + O2 + 8 H(+)(in) = 4 Fe(III)-[cytochrome c] + 2 H2O + 4 H(+)(out). Functionally, component of the cytochrome c oxidase, the last enzyme in the mitochondrial electron transport chain which drives oxidative phosphorylation. The respiratory chain contains 3 multisubunit complexes succinate dehydrogenase (complex II, CII), ubiquinol-cytochrome c oxidoreductase (cytochrome b-c1 complex, complex III, CIII) and cytochrome c oxidase (complex IV, CIV), that cooperate to transfer electrons derived from NADH and succinate to molecular oxygen, creating an electrochemical gradient over the inner membrane that drives transmembrane transport and the ATP synthase. Cytochrome c oxidase is the component of the respiratory chain that catalyzes the reduction of oxygen to water. Electrons originating from reduced cytochrome c in the intermembrane space (IMS) are transferred via the dinuclear copper A center (CU(A)) of subunit 2 and heme A of subunit 1 to the active site in subunit 1, a binuclear center (BNC) formed by heme A3 and copper B (CU(B)). The BNC reduces molecular oxygen to 2 water molecules using 4 electrons from cytochrome c in the IMS and 4 protons from the mitochondrial matrix. The chain is Cytochrome c oxidase subunit 3 (MT-CO3) from Halichoerus grypus (Gray seal).